A 413-amino-acid polypeptide reads, in one-letter code: Divalent metal cation transporter MntH (413 aa).

The next 11 helical transmembrane spans lie at L19–A39, A46–I66, V94–I114, L122–I142, V156–Q176, A196–H216, I241–F261, I290–G310, A329–L349, V350–F370, and V392–V412.

The protein belongs to the NRAMP family.

The protein localises to the cell inner membrane. Its function is as follows. H(+)-stimulated, divalent metal cation uptake system. The polypeptide is Divalent metal cation transporter MntH (Klebsiella pneumoniae (strain 342)).